The sequence spans 60 residues: Toxin C10S2C2 (60 aa).

4 cysteine pairs are disulfide-bonded: C3–C22, C17–C39, C41–C52, and C53–C58. The segment at 41–48 (CPTAMWPY) is important for binding to L-type calcium channels.

Belongs to the three-finger toxin family. Short-chain subfamily. L-type calcium blocker sub-subfamily. As to expression, expressed by the venom gland.

It localises to the secreted. This specific blocker of the L-type calcium channel (Cav1/CACNA1) is a smooth muscle relaxant and an inhibitor of cardiac contractions. This Dendroaspis angusticeps (Eastern green mamba) protein is Toxin C10S2C2.